A 142-amino-acid chain; its full sequence is Lysozyme 2 (142 aa).

An N-terminal signal peptide occupies residues 1-20 (MLKLTLTILAAVLLVTPAFG). Residues 21-142 (KVYTRCSLAR…HTLPSIDDCF (122 aa)) enclose the C-type lysozyme domain. 4 cysteine pairs are disulfide-bonded: cysteine 26-cysteine 141, cysteine 47-cysteine 131, cysteine 82-cysteine 98, and cysteine 94-cysteine 112. The active site involves glutamate 52. Asparagine 66 carries N-linked (GlcNAc...) asparagine glycosylation. The active site involves aspartate 70.

Belongs to the glycosyl hydrolase 22 family. Expressed only in the midgut where it is concentrated around the middle in all larval stages.

Its subcellular location is the secreted. It catalyses the reaction Hydrolysis of (1-&gt;4)-beta-linkages between N-acetylmuramic acid and N-acetyl-D-glucosamine residues in a peptidoglycan and between N-acetyl-D-glucosamine residues in chitodextrins.. Its function is as follows. Lysozymes have primarily a bacteriolytic function. Shows antibacterial activity against Gram-positive bacterium M.luteus but shows no activity against Gram-negative bacterium E.coli. Likely to play a role in the eradication of ingested pathogens during their passage through the intestine. The polypeptide is Lysozyme 2 (Lucilia sericata (Green bottle fly)).